The sequence spans 93 residues: Large ribosomal subunit protein uL23 (93 aa).

It belongs to the universal ribosomal protein uL23 family. As to quaternary structure, part of the 50S ribosomal subunit. Contacts protein L29, and trigger factor when it is bound to the ribosome.

One of the early assembly proteins it binds 23S rRNA. One of the proteins that surrounds the polypeptide exit tunnel on the outside of the ribosome. Forms the main docking site for trigger factor binding to the ribosome. The chain is Large ribosomal subunit protein uL23 from Nautilia profundicola (strain ATCC BAA-1463 / DSM 18972 / AmH).